The primary structure comprises 257 residues: Golgi SNAP receptor complex member 1-2 (257 aa).

Over 1 to 235 (MTESSLDLQE…GSIKRKRSRD (235 aa)) the chain is Cytoplasmic. Residue Asn-51 is modified to Phosphoserine. The stretch at 113–147 (TQKLARHRDILHEYTQEFRRIKGNINSLREHAELL) forms a coiled coil. A helical; Anchor for type IV membrane protein transmembrane segment spans residues 236–256 (TLILSAVIAACTLFLIIYWLS). Residue Lys-257 is a topological domain, vesicular.

Belongs to the GOSR1 family. As to quaternary structure, component of several multiprotein Golgi SNARE complexes.

It localises to the golgi apparatus membrane. It is found in the endoplasmic reticulum membrane. Functionally, involved in transport from the ER to the Golgi apparatus as well as in intra-Golgi transport. It belongs to a super-family of proteins called t-SNAREs or soluble NSF (N-ethylmaleimide-sensitive factor) attachment protein receptor. The sequence is that of Golgi SNAP receptor complex member 1-2 (GOS12) from Arabidopsis thaliana (Mouse-ear cress).